A 262-amino-acid chain; its full sequence is Sepiapterin reductase (262 aa).

An N-acetylmethionine modification is found at Met-1. Gly-15–Gly-21 provides a ligand contact to NADP(+). Ser-33 carries the post-translational modification Phosphoserine. Arg-43–Ser-44 lines the NADP(+) pocket. A Phosphoserine; by CaMK2; in vitro modification is found at Ser-46. Residue Asp-70–Leu-71 coordinates NADP(+). Substrate-binding positions include Ser-158–Leu-159 and Tyr-171. Residue Lys-175 participates in NADP(+) binding. Ser-196 carries the phosphoserine; by CaMK2; in vitro modification. Substrate is bound at residue Gly-200. Leu-202–Gln-207 is an NADP(+) binding site. A Phosphoserine; by CaMK2; in vitro modification is found at Ser-214. Position 258 (Asp-258) interacts with substrate.

It belongs to the sepiapterin reductase family. Homodimer. In terms of processing, in vitro phosphorylation of Ser-46, Ser-196 and Ser-214 by CaMK2 does not change kinetic parameters.

It is found in the cytoplasm. The catalysed reaction is L-erythro-7,8-dihydrobiopterin + NADP(+) = L-sepiapterin + NADPH + H(+). It carries out the reaction (6R)-L-erythro-5,6,7,8-tetrahydrobiopterin + 2 NADP(+) = 6-pyruvoyl-5,6,7,8-tetrahydropterin + 2 NADPH + 2 H(+). Its function is as follows. Catalyzes the final one or two reductions in tetra-hydrobiopterin biosynthesis to form 5,6,7,8-tetrahydrobiopterin. The protein is Sepiapterin reductase (Spr) of Rattus norvegicus (Rat).